The primary structure comprises 459 residues: FAD-dependent monooxygenase nanF (459 aa).

3 residues coordinate FAD: E49, G62, and R121. Active-site residues include R200 and Y230. D327 and G340 together coordinate FAD.

The protein belongs to the paxM FAD-dependent monooxygenase family. It depends on FAD as a cofactor.

It functions in the pathway secondary metabolite biosynthesis. FAD-dependent monooxygenase; part of the gene cluster that mediates the biosynthesis of the benzazepine alkaloid nanangelenin A which contains an unprecedented 3,4-dihydro-1-benzazepine-2,5-dione-N-prenyl-N-acetoxy-anthranilamide scaffold. The first step of nanangelenin biosynthesis is catalyzed by the indoleamine 2,3-dioxygenase nanC which produces N-formyl-kynurenine through the catabolism of tryptophan. The two-module NRPS nanA then utilizes anthranilate (Ant) and L-kynurenine (L-Kyn) to assemble the dipeptide product nanangelenin B. The first adenylation domain of nanA (A1) loads anthranilate onto the T1 domain, while A2 loads kynurenine, generated through spontaneous nonenzymatic deformylation of the nanC-supplied N-formyl-kynurenine. The peptide bond formation between the tethered amino acids is catalyzed by the first condensation domain (C1) between anthranilate's carbonyl carbon and kynurenine's aliphatic primary amine. The second C domain (C2) catalyzes the final cyclization event between the aromatic amine of kynurenine and the tethered carbonyl carbon, yielding nanangelenin B. The terminal T3 domain enhances the catalytic efficiency of C2, suggesting the T2-tethered Ant-L-Kyn is transferred to T3 prior to cyclization by C2. Once released from nanA, nanangelenin B is then prenylated by the prenyltransferase nanD to form nanangelenin C. Nanangelenin C is then N-hydroxylated by the FAD-dependent monooxygenase nanF and further acetylated by the acetyltransferase nanB to yield nanangelenin F. Finally, the N-methyltransferase nanE methylates the amide nitrogen of 1-benzazepine to convert nanangelenin F into nanangelenin A. NanE is also able to methylate most of the intermediates of the pathway such as nanangelenin B and nanangelenin C to produce nanangelenin D and nanangelenin E, respectively. The chain is FAD-dependent monooxygenase nanF from Aspergillus nanangensis.